The primary structure comprises 325 residues: NADH-cytochrome b5 reductase 2 (325 aa).

The chain crosses the membrane as a helical span at residues 32 to 48; that stretch reads VPLYGGLALAAGGAYYY. Residues 74–179 form the FAD-binding FR-type domain; it reads QGWVDLKLAG…KGPIPKYPWE (106 aa). 182–217 serves as a coordination point for FAD; sequence KHDHICMIAGGTGITPMYQIIRKIFNNPNDKTKVTL.

The protein belongs to the flavoprotein pyridine nucleotide cytochrome reductase family. It depends on FAD as a cofactor.

The protein localises to the mitochondrion outer membrane. The catalysed reaction is 2 Fe(III)-[cytochrome b5] + NADH = 2 Fe(II)-[cytochrome b5] + NAD(+) + H(+). Its function is as follows. May mediate the reduction of outer membrane cytochrome b5. In Coccidioides immitis (strain RS) (Valley fever fungus), this protein is NADH-cytochrome b5 reductase 2 (MCR1).